Here is a 938-residue protein sequence, read N- to C-terminus: Protein translocase subunit SecA (938 aa).

ATP contacts are provided by residues glutamine 90, 108 to 112, and aspartate 504; that span reads GEGKT.

The protein belongs to the SecA family. As to quaternary structure, monomer and homodimer. Part of the essential Sec protein translocation apparatus which comprises SecA, SecYEG and auxiliary proteins SecDF. Other proteins may also be involved.

It is found in the cell inner membrane. It localises to the cellular thylakoid membrane. The protein resides in the cytoplasm. It carries out the reaction ATP + H2O + cellular proteinSide 1 = ADP + phosphate + cellular proteinSide 2.. Part of the Sec protein translocase complex. Interacts with the SecYEG preprotein conducting channel. Has a central role in coupling the hydrolysis of ATP to the transfer of proteins into and across the cell membrane, serving as an ATP-driven molecular motor driving the stepwise translocation of polypeptide chains across the membrane. Functionally, probably participates in protein translocation into and across both the cytoplasmic and thylakoid membranes in cyanobacterial cells. The polypeptide is Protein translocase subunit SecA (Microcystis aeruginosa (strain NIES-843 / IAM M-2473)).